Reading from the N-terminus, the 99-residue chain is Acylphosphatase-1 (99 aa).

N-acetylalanine is present on Ala2. Residues Ser9–Lys99 enclose the Acylphosphatase-like domain. Active-site residues include Arg24 and Asn42.

Belongs to the acylphosphatase family. As to expression, organ-common type isozyme is found in many different tissues.

The catalysed reaction is an acyl phosphate + H2O = a carboxylate + phosphate + H(+). This is Acylphosphatase-1 (ACYP1) from Gallus gallus (Chicken).